The primary structure comprises 3391 residues: MNDQRKKAKNTPFNMLKRERNRVSTVQQLTKRFSLGMLQGRGPLKLYMALVAFLRFLTIPPTAGILKRWGTIKKSKAINVLRGFRKEIGRMLNILNRRRRSAGMIIMLIPTVMAFHLTTRNGEPHMIVSRQEKGKSLLFKTEDGVNMCTLMAMDLGELCEDTITYKCPLLRQNEPEDIDCWCNSTSTWVTYGTCTTMGEHRRQKRSVALVPHVGMGLETRTETWMSSEGAWKHVQRIETWILRHPGFTMMAAILAYTIGTTHFQRALIFILLTAVTPSMTMRCIGMSNRDFVEGVSGGSWVDIVLEHGSCVTTMAKNKPTLDFELIKTEAKQPATLRKYCIEAKLTNTTTESRCPTQGEPSLNEEQDKRFVCKHSMVDRGWGNGCGLFGKGGIVTCAMFRCKKNMEGKVVQPENLEYTIVITPHSGEEHAVGNDTGKHGKEIKITPQSSTTEAELTGYGTVTMECSPRTGLDFNEMVLLQMENKAWLVHRQWFLDLPLPWLPGADTQGSNWIQKETLVTFKNPHAKKQDVVVLGSQEGAMHTALTGATEIQMSSGNLLFTGHLKCRLRMDKLQLKGMSYSMCTGKFKVVKEIAETQHGTIVIRVQYEGDGSPCKIPFEIMDLEKRHVLGRLITVNPIVTEKDSPVNIEAEPPFGDSYIIIGVEPGQLKLNWFKKGSSIGQMFETTMRGAKRMAILGDTAWDFGSLGGVFTSIGKALHQVFGAIYGAAFSGVSWTMKILIGVIITWIGMNSRSTSLSVTLVLVGIVTLYLGVMVQADSGCVVSWKNKELKCGSGIFITDNVHTWTEQYKFQPESPSKLASAIQKAHEEGICGIRSVTRLENLMWKQITPELNHILSENEVKLTIMTGDIKGIMQAGKRSLRPQPTELKYSWKTWGKAKMLSTESHNQTFLIDGPETAECPNTNRAWNSLEVEDYGFGVFTTNIWLKLKEKQDVFCDSKLMSAAIKDNRAVHADMGYWIESALNDTWKIEKASFIEVKNCHWPKSHTLWSNGVLESEMIIPKNLAGPVSQHNYRPGYHTQITGPWHLGKLEMDFDFCDGTTVVVTEDCGNRGPSLRTTTASGKLITEWCCRSCTLPPLRYRGEDGCWYGMEIRPLKEKEENLVNSLVTAGHGQVDNFSLGVLGMALFLEEMLRTRVGTKHAILLVAVSFVTLIIGNMSFRDLGRVMVMVGATMTDDIGMGVTYLALLAAFKVRPTFAAGLLLRKLTSKALMMTTIGIVLSSQSTTPETILELTDALALGMMVLKMVRNMEKYQLAVTIMAILCVPNAVILQNAWKVSCTILAVVSVSPLFLTSSQQKTDWIPLALTIKGLNPTAIFLTTLSRTSKKRSWPLNEAIMAVGMVSILASSLLKNDIPMTGPLVAGGPLTVCYVLTGRSADLELERAADVKWEDQAEISGSSPILSITISEDGSMSIKNEEEEQTLTILIRTGLLVISGLFPVSIPITAAAWYLWEVKKQRAGVLWDVPSPPPMGKAELEDGAYRIKQKGILGYSQIGAGVYKEGTFHTMWHVTRGAVLMHKGKRIEPSWADVKKDLISYGGGWKLEGEWKEGEEVQVLALEPGKNPRAVQTKPGLFKTNAGTIGAVSLDFSPGTSGSPIIDKKGKVVGLYGNGVVTRSGAYVSAIAQTEKSIEDNPEIEDDIFRKRRLTIMDLHPGAGKTKRYLPAIVREAIKRGLRTLILAPTRVVAAEMEEALRGLPIRYQTPAIRAEHTGREIVDLMCHATFTMRLLSPVRVPNYNLIIMDEAHFTDPASIAARGYISTRVEMGEAAGIFMTATPPGSRDPFPQSNAPIIDEEREIPERSWNSGHEWVTDFKGKTVWFVPSIKAGNDIAACLSKNGKKVIQLSRKTFDSEYAKTRTNDWDFVVTTDISEMGANFKAERVIDPRRCMKPVILTDGEERVILAGPMPVTHSSAAQRRGRIGRNPKNENDQYIYMGEPLENDEDCAHWKEAKMLLDNINTPEGIIPSMFEPEREKVDAIDGEYRLRGEARTTFVDLMRRGDLPVWLAYRVAAEGINYADRRWCFDGVKNNQILEENVEVEIWTKEGERKKLKPRWLDARIYSDPLALKEFKEFAAGRKSLTLNLITEMGRLPTFMTQKARDALDNLAVLHTAEAGGRAYNHALSELPETLETLLLLTLLATVTGGILLFLMSGRGIGKMTLGMCCIITASILLWYAQIQPHWIAASIILEFFLIVLLIPEPEKQRTPQDNQLTYVVIAILTVVAATMANEMGFLEKTKKDLGLGSIATQQPESNILDIDLRPASAWTLYAVATTFVTPMLRHSIENSSVNVSLTAIANQATVLMGLGKGWPLSKMDIGVPLLAIGCYSQVNPTTLTAALFLLVAHYAIIGPALQAKASREAQKRAAAGIMKNPTVDGITVIDLDPIPYDPKFEKQLGQVMLLVLCVTQVLMMRTTWALCEVLTLATGPISTLWEGNPGRFWNTTIAVSMANIFRGSYLAGAGLLFSIMKNTTNARRGTGNIGETLGEKWKSRLNALGKSEFQIYKKSGIQEVDRTLAKEGIKRGETDHHAVSRGSAKLRWFVERNMVTPEGKVVDLGCGRGGWSYYCGGLKNVREVKGLTKGGPGHEEPIPMSTYGWNLVRLQSGVDVFFIPPEKCDTLLCDIGESSPNPTVEAGRTLRVLNLVENWLNNNTQFCIKVLNPYMPSVIEKMEALQRKYGGALVRNPLSRNSTHEMYWVSNASGNIVSSVNMISRMLINRFTMRYKKATYEPDVDLGSGTRNIGIESEIPNLDIIGKRIEKIKQEHETSWHYDQDHPYKTWAYHGSYETKQTGSASSMVNGVFRLLTKPWDVVPMVTQMAMTDTTPFGQQRVFKEKVDTRTQEPKEGTKKLMKITAEWLWKELGKKKTPRMCTREEFTRKVRSNAALGAIFTDENKWKSAREAVEDSRFWELVDKERNLHLEGKCETCVYNIMGKREKKLGEFGKAKGSRAIWYMWLGARFLEFEALGFLNEDHWFSRENSLSGVEGEGLHKLGYILRDVSKKEGGAMYADDTAGWDTRITLEDLKNEAMVTNHMEGEHKKLAEAIFKLTYQNKVVRVQRPTPRGTVMDIISRRDQRGSGQVGTYGLNTFTNMEAQLIRQMEGEGVFKSIQHLTITEEIAVQNWLARVGRERLSRMAISGDDCVVKPLDDRLPSALTALNDTGKIRKDIQQWEPSRGWNDWTQVPFCSHHFHELIMKDGRVLVVPCRNQDELIGRARISQGAGWSLRETACLGKSYDQMWSLMYFHRRDLRLAANAICSAVPSHWVPTSRTTWSIHAKHEWMTTEDMLTVWNRVWIQENPWMEDKTPVESWEEIPYLGKREDQWCGSLIGLTSRATWAKNIQAAINQVRSLIGNEEYTDYMPSMKRFRREEEEAGVLW.

The segment at 1–15 (MNDQRKKAKNTPFNM) is interaction with host EXOC1. Residues 1–101 (MNDQRKKAKN…LNILNRRRRS (101 aa)) are Cytoplasmic-facing. The segment at 37 to 72 (MLQGRGPLKLYMALVAFLRFLTIPPTAGILKRWGTI) is hydrophobic; homodimerization of capsid protein C. A propeptide spans 101-114 (SAGMIIMLIPTVMA) (ER anchor for the capsid protein C, removed in mature form by serine protease NS3). A helical transmembrane segment spans residues 102–119 (AGMIIMLIPTVMAFHLTT). The Extracellular segment spans residues 120–242 (RNGEPHMIVS…HVQRIETWIL (123 aa)). The N-linked (GlcNAc...) asparagine; by host glycan is linked to Asn183. Residues 243–260 (RHPGFTMMAAILAYTIGT) traverse the membrane as a helical segment. A topological domain (cytoplasmic) is located at residue Thr261. The helical transmembrane segment at 262 to 280 (HFQRALIFILLTAVTPSMT) threads the bilayer. Residues 281-725 (MRCIGMSNRD…LHQVFGAIYG (445 aa)) are Extracellular-facing. 4 cysteine pairs are disulfide-bonded: Cys283–Cys310, Cys340–Cys401, Cys354–Cys385, and Cys372–Cys396. Residue Asn347 is glycosylated (N-linked (GlcNAc...) asparagine; by host). The interval 378-391 (DRGWGNGCGLFGKG) is fusion peptide. Asn433 carries an N-linked (GlcNAc...) asparagine; by host glycan. 2 disulfides stabilise this stretch: Cys465–Cys565 and Cys582–Cys613. The chain crosses the membrane as a helical span at residues 726-746 (AAFSGVSWTMKILIGVIITWI). The Cytoplasmic segment spans residues 747–752 (GMNSRS). The chain crosses the membrane as a helical span at residues 753-773 (TSLSVTLVLVGIVTLYLGVMV). Over 774–1195 (QADSGCVVSW…MVGATMTDDI (422 aa)) the chain is Extracellular. 6 disulfides stabilise this stretch: Cys779–Cys790, Cys830–Cys918, Cys954–Cys998, Cys1055–Cys1104, Cys1066–Cys1088, and Cys1087–Cys1091. N-linked (GlcNAc...) asparagine; by host glycans are attached at residues Asn905 and Asn982. N-linked (GlcNAc...) asparagine; by host glycosylation is found at Asn1134 and Asn1174. The helical transmembrane segment at 1196–1220 (GMGVTYLALLAAFKVRPTFAAGLLL) threads the bilayer. At 1221–1226 (RKLTSK) the chain is on the cytoplasmic side. A helical membrane pass occupies residues 1227-1245 (ALMMTTIGIVLSSQSTTPE). Over 1246–1269 (TILELTDALALGMMVLKMVRNMEK) the chain is Lumenal. Residues 1270-1290 (YQLAVTIMAILCVPNAVILQN) form a helical membrane-spanning segment. A topological domain (cytoplasmic) is located at residue Ala1291. A helical membrane pass occupies residues 1292–1310 (WKVSCTILAVVSVSPLFLT). Residues 1311 to 1317 (SSQQKTD) lie on the Lumenal side of the membrane. The helical transmembrane segment at 1318–1338 (WIPLALTIKGLNPTAIFLTTL) threads the bilayer. Topologically, residues 1339-1346 (SRTSKKRS) are cytoplasmic. The helical transmembrane segment at 1347–1367 (WPLNEAIMAVGMVSILASSLL) threads the bilayer. The Lumenal portion of the chain corresponds to 1368–1370 (KND). Residues 1371-1391 (IPMTGPLVAGGPLTVCYVLTG) traverse the membrane as a helical segment. At 1392–1447 (RSADLELERAADVKWEDQAEISGSSPILSITISEDGSMSIKNEEEEQTLTILIRTG) the chain is on the cytoplasmic side. Residues 1398–1437 (LERAADVKWEDQAEISGSSPILSITISEDGSMSIKNEEEE) form an interacts with and activates NS3 protease region. Residues 1448 to 1468 (LLVISGLFPVSIPITAAAWYL) constitute an intramembrane region (helical). The Cytoplasmic portion of the chain corresponds to 1469–2147 (WEVKKQRAGV…LSELPETLET (679 aa)). The Peptidase S7 domain maps to 1476-1653 (AGVLWDVPSP…EKSIEDNPEI (178 aa)). Active-site charge relay system; for serine protease NS3 activity residues include His1526, Asp1550, and Ser1610. The Helicase ATP-binding domain occupies 1655–1811 (DDIFRKRRLT…QSNAPIIDEE (157 aa)). The tract at residues 1659–1662 (RKRR) is important for RNA-binding. 1668–1675 (LHPGAGKT) lines the ATP pocket. Positions 1759–1762 (DEAH) match the DEAH box motif. The region spanning 1821–1988 (SGHEWVTDFK…IIPSMFEPER (168 aa)) is the Helicase C-terminal domain. Position 1863 is an N6-acetyllysine; by host (Lys1863). Residues 2148–2168 (LLLLTLLATVTGGILLFLMSG) form a helical membrane-spanning segment. Over 2169-2170 (RG) the chain is Lumenal. The segment at residues 2171-2191 (IGKMTLGMCCIITASILLWYA) is an intramembrane region (helical). A topological domain (lumenal) is located at residue Gln2192. A helical membrane pass occupies residues 2193 to 2213 (IQPHWIAASIILEFFLIVLLI). The Cytoplasmic segment spans residues 2214-2228 (PEPEKQRTPQDNQLT). Residues 2229-2249 (YVVIAILTVVAATMANEMGFL) form a helical membrane-spanning segment. The Lumenal portion of the chain corresponds to 2250–2274 (EKTKKDLGLGSIATQQPESNILDID). Positions 2275 to 2295 (LRPASAWTLYAVATTFVTPML) form an intramembrane region, helical. Residues 2296–2316 (RHSIENSSVNVSLTAIANQAT) are Lumenal-facing. Asn2301 and Asn2305 each carry an N-linked (GlcNAc...) asparagine; by host glycan. Residues 2317-2337 (VLMGLGKGWPLSKMDIGVPLL) constitute an intramembrane region (helical). Residues 2338–2347 (AIGCYSQVNP) lie on the Lumenal side of the membrane. The chain crosses the membrane as a helical span at residues 2348-2368 (TTLTAALFLLVAHYAIIGPAL). The Cytoplasmic segment spans residues 2369 to 2413 (QAKASREAQKRAAAGIMKNPTVDGITVIDLDPIPYDPKFEKQLGQ). The helical transmembrane segment at 2414 to 2434 (VMLLVLCVTQVLMMRTTWALC) threads the bilayer. Topologically, residues 2435–2459 (EVLTLATGPISTLWEGNPGRFWNTT) are lumenal. A glycan (N-linked (GlcNAc...) asparagine; by host) is linked at Asn2457. A helical transmembrane segment spans residues 2460–2480 (IAVSMANIFRGSYLAGAGLLF). Residues 2481 to 3391 (SIMKNTTNAR…REEEEAGVLW (911 aa)) lie on the Cytoplasmic side of the membrane. An mRNA cap 0-1 NS5-type MT domain is found at 2493–2755 (TGNIGETLGE…DVDLGSGTRN (263 aa)). An S-adenosyl-L-methionine-binding site is contributed by Ser2547. Ser2547 is subject to Phosphoserine. Residue Lys2552 is the For 2'-O-MTase activity of the active site. The SUMO-interacting motif signature appears at 2568 to 2571 (VVDL). 6 residues coordinate S-adenosyl-L-methionine: Gly2577, Trp2578, Thr2595, Lys2596, Asp2622, and Val2623. The active-site For 2'-O-MTase activity is Asp2637. Ile2638 lines the S-adenosyl-L-methionine pocket. Active-site for 2'-O-MTase activity residues include Lys2672 and Glu2708. Tyr2710 is a binding site for S-adenosyl-L-methionine. Residues Glu2929, His2933, Cys2938, and Cys2941 each coordinate Zn(2+). Residues 3020 to 3169 (AMYADDTAGW…PLDDRLPSAL (150 aa)) form the RdRp catalytic domain. His3203, Cys3219, and Cys3338 together coordinate Zn(2+).

It in the N-terminal section; belongs to the class I-like SAM-binding methyltransferase superfamily. mRNA cap 0-1 NS5-type methyltransferase family. As to quaternary structure, homodimer. Interacts (via N-terminus) with host EXOC1 (via C-terminus); this interaction results in EXOC1 degradation through the proteasome degradation pathway. In terms of assembly, forms heterodimers with envelope protein E in the endoplasmic reticulum and Golgi. Homodimer; in the endoplasmic reticulum and Golgi. Interacts with protein prM. Interacts with non-structural protein 1. As to quaternary structure, homodimer; Homohexamer when secreted. Interacts with envelope protein E. Interacts with host PRKAA1. In terms of assembly, interacts (via N-terminus) with serine protease NS3. Forms a heterodimer with serine protease NS3. May form homooligomers. As to quaternary structure, forms a heterodimer with NS2B. Interacts with NS4B. Interacts with unphosphorylated RNA-directed RNA polymerase NS5; this interaction stimulates RNA-directed RNA polymerase NS5 guanylyltransferase activity. Interacts with host SHFL. In terms of assembly, interacts with host MAVS; this interaction inhibits the synthesis of IFN-beta. Interacts with host SHFL. Interacts with host AUP1; the interaction occurs in the presence of Dengue virus NS4B and induces lipophagy which facilitates production of virus progeny particles. May interact with host SRPRA and SEC61G. Interacts with serine protease NS3. As to quaternary structure, homodimer. Interacts with host STAT2; this interaction inhibits the phosphorylation of the latter, and, when all viral proteins are present (polyprotein), targets STAT2 for degradation. Interacts with serine protease NS3. Interacts with host PAF1 complex; the interaction may prevent the recruitment of the PAF1 complex to interferon-responsive genes, and thus reduces the immune response. Specific enzymatic cleavages in vivo yield mature proteins. Cleavages in the lumen of endoplasmic reticulum are performed by host signal peptidase, whereas cleavages in the cytoplasmic side are performed by serine protease NS3. Signal cleavage at the 2K-4B site requires a prior NS3 protease-mediated cleavage at the 4A-2K site. In terms of processing, cleaved in post-Golgi vesicles by a host furin, releasing the mature small envelope protein M, and peptide pr. This cleavage is incomplete as up to 30% of viral particles still carry uncleaved prM. Post-translationally, N-glycosylated. N-glycosylated. The excreted form is glycosylated and this is required for efficient secretion of the protein from infected cells. In terms of processing, acetylated by host KAT5. Acetylation modulates NS3 RNA-binding and unwinding activities and plays an important positive role for viral replication. Post-translationally, sumoylation of RNA-directed RNA polymerase NS5 increases NS5 protein stability allowing proper viral RNA replication. Phosphorylated on serines residues. This phosphorylation may trigger NS5 nuclear localization.

Its subcellular location is the virion. The protein resides in the host nucleus. The protein localises to the host cytoplasm. It is found in the host perinuclear region. It localises to the secreted. Its subcellular location is the virion membrane. The protein resides in the host endoplasmic reticulum membrane. The protein localises to the host mitochondrion. The catalysed reaction is Selective hydrolysis of -Xaa-Xaa-|-Yaa- bonds in which each of the Xaa can be either Arg or Lys and Yaa can be either Ser or Ala.. It catalyses the reaction RNA(n) + a ribonucleoside 5'-triphosphate = RNA(n+1) + diphosphate. The enzyme catalyses a ribonucleoside 5'-triphosphate + H2O = a ribonucleoside 5'-diphosphate + phosphate + H(+). It carries out the reaction ATP + H2O = ADP + phosphate + H(+). The catalysed reaction is a 5'-end (5'-triphosphoguanosine)-ribonucleoside in mRNA + S-adenosyl-L-methionine = a 5'-end (N(7)-methyl 5'-triphosphoguanosine)-ribonucleoside in mRNA + S-adenosyl-L-homocysteine. It catalyses the reaction a 5'-end (N(7)-methyl 5'-triphosphoguanosine)-ribonucleoside in mRNA + S-adenosyl-L-methionine = a 5'-end (N(7)-methyl 5'-triphosphoguanosine)-(2'-O-methyl-ribonucleoside) in mRNA + S-adenosyl-L-homocysteine + H(+). In terms of biological role, plays a role in virus budding by binding to the cell membrane and gathering the viral RNA into a nucleocapsid that forms the core of a mature virus particle. During virus entry, may induce genome penetration into the host cytoplasm after hemifusion induced by the surface proteins. Can migrate to the cell nucleus where it modulates host functions. Overcomes the anti-viral effects of host EXOC1 by sequestering and degrading the latter through the proteasome degradation pathway. Inhibits RNA silencing by interfering with host Dicer. Functionally, prevents premature fusion activity of envelope proteins in trans-Golgi by binding to envelope protein E at pH6.0. After virion release in extracellular space, gets dissociated from E dimers. Its function is as follows. Acts as a chaperone for envelope protein E during intracellular virion assembly by masking and inactivating envelope protein E fusion peptide. prM is the only viral peptide matured by host furin in the trans-Golgi network probably to avoid catastrophic activation of the viral fusion activity in acidic Golgi compartment prior to virion release. prM-E cleavage is inefficient, and many virions are only partially matured. These uncleaved prM would play a role in immune evasion. In terms of biological role, may play a role in virus budding. Exerts cytotoxic effects by activating a mitochondrial apoptotic pathway through M ectodomain. May display a viroporin activity. Binds to host cell surface receptor and mediates fusion between viral and cellular membranes. Envelope protein is synthesized in the endoplasmic reticulum in the form of heterodimer with protein prM. They play a role in virion budding in the ER, and the newly formed immature particle is covered with 60 spikes composed of heterodimer between precursor prM and envelope protein E. The virion is transported to the Golgi apparatus where the low pH causes dissociation of PrM-E heterodimers and formation of E homodimers. prM-E cleavage is inefficient, and many virions are only partially matured. These uncleaved prM would play a role in immune evasion. Functionally, involved in immune evasion, pathogenesis and viral replication. Once cleaved off the polyprotein, is targeted to three destinations: the viral replication cycle, the plasma membrane and the extracellular compartment. Essential for viral replication. Required for formation of the replication complex and recruitment of other non-structural proteins to the ER-derived membrane structures. Excreted as a hexameric lipoparticle that plays a role against host immune response. Antagonizing the complement function. Binds to the host macrophages and dendritic cells. Inhibits signal transduction originating from Toll-like receptor 3 (TLR3). Its function is as follows. Involved in immune evasion, pathogenesis and viral replication. Once cleaved off the polyprotein, is targeted to three destinations: the viral replication cycle, the plasma membrane and the extracellular compartment. Essential for viral replication. Required for formation of the replication complex and recruitment of other non-structural proteins to the ER-derived membrane structures. Excreted as a hexameric lipoparticle that plays a role against host immune response. Antagonizing the complement function. Binds to the host macrophages and dendritic cells. Inhibits signal transduction originating from Toll-like receptor 3 (TLR3). Mediates complement activation, which may contribute to the pathogenesis of the vascular leakage that occurs in severe dengue disease. Activates autophagy through the AMPK/ERK/mTOR signaling pathway. Mechanistically, acts as the assembly platform for STK11-AMPK interactions and promotes STK11-AMPK interactions. In turn, promotes phosphorylation of the AMPK kinase structural domain and activates AMPK, thereby positively regulating the AMPK/ERK/mTOR signaling pathway and inducing autophagy. In terms of biological role, component of the viral RNA replication complex that functions in virion assembly and antagonizes the host immune response. Required cofactor for the serine protease function of NS3. May have membrane-destabilizing activity and form viroporins. Functionally, displays three enzymatic activities: serine protease, NTPase and RNA helicase. NS3 serine protease, in association with NS2B, performs its autocleavage and cleaves the polyprotein at dibasic sites in the cytoplasm: C-prM, NS2A-NS2B, NS2B-NS3, NS3-NS4A, NS4A-2K and NS4B-NS5. NS3 RNA helicase binds RNA and unwinds dsRNA in the 3' to 5' direction. Its function is as follows. Regulates the ATPase activity of the NS3 helicase activity. NS4A allows NS3 helicase to conserve energy during unwinding. Plays a role in the inhibition of the host innate immune response. Interacts with host MAVS and thereby prevents the interaction between RIGI and MAVS. In turn, IFN-beta production is impaired. Interacts with host AUP1 which mediates induction of lipophagy in host cells and facilitates production of virus progeny particles. In terms of biological role, functions as a signal peptide for NS4B and is required for the interferon antagonism activity of the latter. Induces the formation of ER-derived membrane vesicles where the viral replication takes place. Inhibits interferon (IFN)-induced host STAT1 phosphorylation and nuclear translocation, thereby preventing the establishment of cellular antiviral state by blocking the IFN-alpha/beta pathway. Functionally, replicates the viral (+) and (-) RNA genome, and performs the capping of genomes in the cytoplasm. NS5 methylates viral RNA cap at guanine N-7 and ribose 2'-O positions. Besides its role in RNA genome replication, also prevents the establishment of cellular antiviral state by blocking the interferon-alpha/beta (IFN-alpha/beta) signaling pathway. Inhibits host TYK2 and STAT2 phosphorylation, thereby preventing activation of JAK-STAT signaling pathway. May reduce immune responses by preventing the recruitment of the host PAF1 complex to interferon-responsive genes. This is Genome polyprotein from Aedes aegypti (Yellowfever mosquito).